The sequence spans 218 residues: 3,4-dihydroxy-2-butanone 4-phosphate synthase (218 aa).

D-ribulose 5-phosphate is bound by residues 38 to 39 (RE), Asp43, 151 to 155 (RRGHT), and Glu175. Mg(2+) is bound at residue Glu39. Position 154 (His154) interacts with Mg(2+).

Belongs to the DHBP synthase family. Homodimer. Mg(2+) serves as cofactor. It depends on Mn(2+) as a cofactor.

The catalysed reaction is D-ribulose 5-phosphate = (2S)-2-hydroxy-3-oxobutyl phosphate + formate + H(+). Its pathway is cofactor biosynthesis; riboflavin biosynthesis; 2-hydroxy-3-oxobutyl phosphate from D-ribulose 5-phosphate: step 1/1. Functionally, catalyzes the conversion of D-ribulose 5-phosphate to formate and 3,4-dihydroxy-2-butanone 4-phosphate. The chain is 3,4-dihydroxy-2-butanone 4-phosphate synthase from Vibrio atlanticus (strain LGP32) (Vibrio splendidus (strain Mel32)).